The primary structure comprises 191 residues: Photosystem I assembly protein Ycf4 (191 aa).

Helical transmembrane passes span 33–53 (LLAVIVTIGGLGFTLTCLSSY) and 74–94 (LVMGLYGIAGLLLASYLWAMI).

The protein belongs to the Ycf4 family.

The protein localises to the cellular thylakoid membrane. Seems to be required for the assembly of the photosystem I complex. This Prochlorococcus marinus (strain MIT 9303) protein is Photosystem I assembly protein Ycf4.